The sequence spans 278 residues: Bifunctional protein FolD (278 aa).

NADP(+) contacts are provided by residues 164 to 166 and T228; that span reads GRS.

Belongs to the tetrahydrofolate dehydrogenase/cyclohydrolase family. In terms of assembly, homodimer.

The enzyme catalyses (6R)-5,10-methylene-5,6,7,8-tetrahydrofolate + NADP(+) = (6R)-5,10-methenyltetrahydrofolate + NADPH. It catalyses the reaction (6R)-5,10-methenyltetrahydrofolate + H2O = (6R)-10-formyltetrahydrofolate + H(+). It participates in one-carbon metabolism; tetrahydrofolate interconversion. Its function is as follows. Catalyzes the oxidation of 5,10-methylenetetrahydrofolate to 5,10-methenyltetrahydrofolate and then the hydrolysis of 5,10-methenyltetrahydrofolate to 10-formyltetrahydrofolate. This is Bifunctional protein FolD from Mycoplasmopsis synoviae (strain 53) (Mycoplasma synoviae).